The primary structure comprises 153 residues: Arginine repressor (153 aa).

Belongs to the ArgR family.

The protein resides in the cytoplasm. The protein operates within amino-acid biosynthesis; L-arginine biosynthesis [regulation]. Functionally, regulates arginine biosynthesis genes. This Haemophilus ducreyi (strain 35000HP / ATCC 700724) protein is Arginine repressor.